The primary structure comprises 367 residues: Prenyltransferase idtC (367 aa).

The signal sequence occupies residues M1–A22. The span at T32–T42 shows a compositional bias: low complexity. Positions T32–N84 are disordered. The N-linked (GlcNAc...) asparagine glycan is linked to N67. The span at K70–K82 shows a compositional bias: basic and acidic residues. Residue H132 coordinates substrate. Mg(2+) is bound by residues D139 and D143. R148 lines the substrate pocket. The N-linked (GlcNAc...) asparagine glycan is linked to N150. Substrate contacts are provided by K233, T234, Q264, N271, and K281.

The protein belongs to the FPP/GGPP synthase family. Mg(2+) serves as cofactor.

The protein operates within secondary metabolite biosynthesis. Its function is as follows. Prenyltransferase; part of the gene cluster that mediates the biosynthesis of paspalitrems, indole-diterpene (IDT) mycotoxins that are potent tremorgens in mammals. The geranylgeranyl diphosphate (GGPP) synthase idtG is proposed to catalyze the first step in IDT biosynthesis via catalysis of a series of iterative condensations of isopentenyl diphosphate (IPP) with dimethylallyl diphosphate (DMAPP), geranyl diphosphate (GPP), and farnesyl diphosphate (FPP), to form GGPP. Condensation of indole-3-glycerol phosphate with GGPP by the prenyltransferase idtC then forms 3-geranylgeranylindole (3-GGI). Epoxidation of the two terminal alkenes of the geranylgeranyl moiety by the FAD-dependent monooxygenase idtM, and cyclization by the terpene cyclase idtB then leads to the production of paspaline. The cytochrome P450 monooxygenase idtP then catalyzes oxidative elimination of the pendant methyl group at C-12 of paspaline and generates the C-10 ketone to yield 13-desoxypaxilline. The cytochrome P450 monooxygenase idtQ may catalyze the C-13 oxidation of 13-desoxypaxilline to afford paxilline. Considering that both paspalicine and paxilline were detected in C.paspali, idtQ also catalyzes the formation of paspalinine from 13-desoxypaxilline via paspalicine as an intermediate. Finally, the alpha-prenyltransferase idtF prenylates paspalinine at the C-20 or the C-21 positions to yield paspalitrems A and C, respectively. The hydroxylation of paspalitrem A at C-32 by a still unknown oxidase affords paspalitrem B. This is Prenyltransferase idtC from Claviceps paspali (Rye ergot fungus).